We begin with the raw amino-acid sequence, 876 residues long: GATOR2 complex protein MIOS (876 aa).

WD repeat units follow at residues serine 59 to serine 101, lysine 112 to alanine 156, glycine 182 to phenylalanine 222, asparagine 224 to phenylalanine 262, glutamate 266 to glycine 307, and arginine 400 to threonine 440. The C4-type zinc finger occupies valine 738–proline 784. Positions 740, 743, 778, 781, 791, 830, 833, 835, 838, 841, 852, 857, and 861 each coordinate Zn(2+). The segment at leucine 785–threonine 866 adopts an RING-type; atypical zinc-finger fold.

It belongs to the WD repeat mio family. As to quaternary structure, component of the GATOR2 subcomplex, composed of MIOS, SEC13, SEH1L, WDR24 and WDR59. The GATOR2 complex interacts with CASTOR1 and CASTOR2; the interaction is negatively regulated by arginine. The GATOR2 complex interacts with SESN1, SESN2 and SESN3; the interaction is negatively regulated by amino acids. Interacts with SAR1; the interaction is direct, disrupted by leucine and mediates the interaction of SAR1 with the GATOR2 complex to negatively regulate the TORC1 signaling upon leucine deprivation.

The protein localises to the lysosome membrane. With respect to regulation, the GATOR2 complex is negatively regulated by the upstream amino acid sensors CASTOR1 and SESN2, which sequester the GATOR2 complex in absence of amino acids. In the presence of abundant amino acids, GATOR2 is released from CASTOR1 and SESN2 and activated. As a component of the GATOR2 complex, functions as an activator of the amino acid-sensing branch of the mTORC1 signaling pathway. The GATOR2 complex indirectly activates mTORC1 through the inhibition of the GATOR1 subcomplex. GATOR2 probably acts as an E3 ubiquitin-protein ligase toward GATOR1. In the presence of abundant amino acids, the GATOR2 complex mediates ubiquitination of the NPRL2 core component of the GATOR1 complex, leading to GATOR1 inactivation. In the absence of amino acids, GATOR2 is inhibited, activating the GATOR1 complex. Within the GATOR2 complex, MIOS is required to prevent autoubiquitination of WDR24, the catalytic subunit of the complex. This Danio rerio (Zebrafish) protein is GATOR2 complex protein MIOS.